We begin with the raw amino-acid sequence, 547 residues long: Dihydroxy-acid dehydratase (547 aa).

Residue Asp78 coordinates Mg(2+). Cys119 contributes to the [2Fe-2S] cluster binding site. Asp120 and Lys121 together coordinate Mg(2+). Lys121 carries the post-translational modification N6-carboxylysine. Cys191 is a binding site for [2Fe-2S] cluster. Mg(2+) is bound at residue Glu439. Ser464 acts as the Proton acceptor in catalysis.

It belongs to the IlvD/Edd family. As to quaternary structure, homodimer. [2Fe-2S] cluster serves as cofactor. Mg(2+) is required as a cofactor.

The catalysed reaction is (2R)-2,3-dihydroxy-3-methylbutanoate = 3-methyl-2-oxobutanoate + H2O. It catalyses the reaction (2R,3R)-2,3-dihydroxy-3-methylpentanoate = (S)-3-methyl-2-oxopentanoate + H2O. It functions in the pathway amino-acid biosynthesis; L-isoleucine biosynthesis; L-isoleucine from 2-oxobutanoate: step 3/4. Its pathway is amino-acid biosynthesis; L-valine biosynthesis; L-valine from pyruvate: step 3/4. Functionally, functions in the biosynthesis of branched-chain amino acids. Catalyzes the dehydration of (2R,3R)-2,3-dihydroxy-3-methylpentanoate (2,3-dihydroxy-3-methylvalerate) into 2-oxo-3-methylpentanoate (2-oxo-3-methylvalerate) and of (2R)-2,3-dihydroxy-3-methylbutanoate (2,3-dihydroxyisovalerate) into 2-oxo-3-methylbutanoate (2-oxoisovalerate), the penultimate precursor to L-isoleucine and L-valine, respectively. This is Dihydroxy-acid dehydratase from Archaeoglobus fulgidus (strain ATCC 49558 / DSM 4304 / JCM 9628 / NBRC 100126 / VC-16).